Here is a 331-residue protein sequence, read N- to C-terminus: DNA-directed RNA polymerase subunit alpha (331 aa).

An alpha N-terminal domain (alpha-NTD) region spans residues 1–226; sequence MLIAQRPTLT…ELFGLARELN (226 aa). The segment at 243-331 is alpha C-terminal domain (alpha-CTD); it reads LSSELSMPIE…SYDEDETTTN (89 aa).

The protein belongs to the RNA polymerase alpha chain family. In terms of assembly, homodimer. The RNAP catalytic core consists of 2 alpha, 1 beta, 1 beta' and 1 omega subunit. When a sigma factor is associated with the core the holoenzyme is formed, which can initiate transcription.

It catalyses the reaction RNA(n) + a ribonucleoside 5'-triphosphate = RNA(n+1) + diphosphate. DNA-dependent RNA polymerase catalyzes the transcription of DNA into RNA using the four ribonucleoside triphosphates as substrates. This is DNA-directed RNA polymerase subunit alpha from Clavibacter michiganensis subsp. michiganensis (strain NCPPB 382).